Reading from the N-terminus, the 856-residue chain is Increased rDNA silencing protein 4 (856 aa).

Disordered regions lie at residues 1–204 (MSAS…EPKS), 230–563 (KQEE…PTPE), and 589–672 (TSLE…DEDL). Composition is skewed to low complexity over residues 12–42 (GPASPTSSSTGASTNPATSGLAAALKGATLA), 67–84 (VPTPGTGSVSTSTSRTVG), and 111–130 (SRVVTSTPSSSSSVGSAGRT). Basic and acidic residues predominate over residues 152 to 162 (HVEERANDHAP). Residues 194 to 204 (ASAKPSSEPKS) are compositionally biased toward low complexity. Basic residues predominate over residues 239 to 254 (KKKKKKKPRPASKTQH). 2 stretches are compositionally biased toward polar residues: residues 255–275 (HQTLTSPSPTPSEGLSIENQC) and 303–315 (SLSTVESIKSSTG). A compositionally biased stretch (basic and acidic residues) spans 329-347 (GETRNRNGDVRDKPSREGG). Composition is skewed to polar residues over residues 396-410 (PVSQHAQISETTIIS), 451-468 (RVVSPSVDQSQTIRQSAE), and 478-488 (RNSTSSDETFV). Residues 503 to 514 (KELERVRPRLDR) are compositionally biased toward basic and acidic residues. Residues 517-535 (TSTSSRASRVSTPASVRSP) show a composition bias toward low complexity. Residues 603-620 (RRGHRHHHLPHPHLRHRT) show a composition bias toward basic residues. A compositionally biased stretch (polar residues) spans 644 to 654 (PSRQTEHTQPA). One can recognise an EH domain in the interval 743–832 (DSLGQVDLSR…EGVWESAMDR (90 aa)).

It belongs to the IRS4 family.

In terms of biological role, positive regulator of phosphatidylinositol 4,5-bisphosphate turnover and negatively regulates signaling through the cell integrity pathway. Involved in rDNA silencing. In Neurospora crassa (strain ATCC 24698 / 74-OR23-1A / CBS 708.71 / DSM 1257 / FGSC 987), this protein is Increased rDNA silencing protein 4 (irs-4).